A 367-amino-acid chain; its full sequence is MAQKTPTKGTRSSPRKKAWGSPIKATAKFQSDIFSVEDFADLSNRSWAEVTEEDDELASRLEEERRCKSESRRKGQPKRAQNSQNKPKFVRSLELTNEVFQSTSSRRSQRSKSRTRNGDTITTVEEHTETVVMESSSGPISRKRCLSNASTINEGASPSKRRPETGKSNRKAPRGRLFTNGGSDSSSVASSPSRRDHWEEPTLGWCTDEAVLKRRSREIDRAKEKAVYQRYTSEVPLRDRIKGQHPRTPNKLINFSRRSWDTQIKKWKRSLYEYCGEEPSDSVNTSFCYSDSDALSEAGDNDKEIENRSVLRDLVIPVTMRPEVDSMASLLGKFDVDSQMGMDESTLKASTNTDPSAPTDFSKMSSH.

A compositionally biased stretch (polar residues) spans 1–12 (MAQKTPTKGTRS). 2 disordered regions span residues 1 to 24 (MAQK…SPIK) and 49 to 200 (EVTE…HWEE). Positions 57-73 (LASRLEEERRCKSESRR) are enriched in basic and acidic residues. A compositionally biased stretch (polar residues) spans 147–156 (SNASTINEGA). Positions 183–192 (SDSSSVASSP) are enriched in low complexity. Residues 206–275 (CTDEAVLKRR…KWKRSLYEYC (70 aa)) form an RNA-binding region. The disordered stretch occupies residues 342–367 (MDESTLKASTNTDPSAPTDFSKMSSH). Over residues 347–356 (LKASTNTDPS) the composition is skewed to polar residues.

It belongs to the SLBP family. Post-translationally, ubiquitinated by the CBC(fem-1) (Cul2-ElonginB-ElonginC) E3 ubiquitin-protein ligase complex, leading to its degradation.

In terms of biological role, involved in histone pre-mRNA 3' processing. Required for chromosome condensation, progression of cell death and morphogenesis. This chain is Histone RNA hairpin-binding protein (cdl-1), found in Caenorhabditis elegans.